The following is a 198-amino-acid chain: Protein uvp1 (198 aa).

Positions 1–140 constitute a Resolvase/invertase-type recombinase catalytic domain; it reads MIIGYARKST…SGLAAARARG (140 aa). Serine 9 serves as the catalytic O-(5'-phospho-DNA)-serine intermediate. A DNA-binding region (H-T-H motif) is located at residues 168–187; that stretch reads VGAVAKRFNVSRMTIYRYTT.

Belongs to the site-specific recombinase resolvase family.

Functionally, cooperates with the mucAB genes in the DNA repair process. Could be a resolvase-invertase protein. This is Protein uvp1 (uvp1) from Escherichia coli.